The following is a 238-amino-acid chain: MDEPAYRRVVVKLSGEYLAGSQPFGIDQPTVDRIAGDLASARALGTEIAVVVGGGNIFRGVEVSSRGVSRPTGDTMGMLATVMNCLALEAALERRGQSARALSAFVMPEVCELFTRNAAHKYLSEGRIVLLGGGTGNPYFTTDTTAVLRAAEIGAQAVLKATNVDGVYSSDPKKDPSATRFERLSHSQALEGGYKVMDATAFALARETSLPIIVFSIAEPGSIGAILKGTGRGTIVAS.

Position 12–15 (12–15 (KLSG)) interacts with ATP. Gly54 provides a ligand contact to UMP. Gly55 and Arg59 together coordinate ATP. UMP contacts are provided by residues Asp74 and 135 to 142 (TGNPYFTT). Residues Thr162, Asn163, Tyr168, and Asp171 each contribute to the ATP site.

Belongs to the UMP kinase family. As to quaternary structure, homohexamer.

It is found in the cytoplasm. The catalysed reaction is UMP + ATP = UDP + ADP. Its pathway is pyrimidine metabolism; CTP biosynthesis via de novo pathway; UDP from UMP (UMPK route): step 1/1. With respect to regulation, inhibited by UTP. In terms of biological role, catalyzes the reversible phosphorylation of UMP to UDP. The protein is Uridylate kinase of Nitrobacter hamburgensis (strain DSM 10229 / NCIMB 13809 / X14).